Consider the following 302-residue polypeptide: Probable 2-(5''-triphosphoribosyl)-3'-dephosphocoenzyme-A synthase 1 (302 aa).

This sequence belongs to the CitG/MdcB family.

The catalysed reaction is 3'-dephospho-CoA + ATP = 2'-(5''-triphospho-alpha-D-ribosyl)-3'-dephospho-CoA + adenine. The polypeptide is Probable 2-(5''-triphosphoribosyl)-3'-dephosphocoenzyme-A synthase 1 (Salmonella paratyphi A (strain ATCC 9150 / SARB42)).